Here is a 177-residue protein sequence, read N- to C-terminus: Nucleoside triphosphate/diphosphate phosphatase (177 aa).

The active-site Proton donor is R23. Mg(2+) contacts are provided by N87, D103, D105, D107, D120, and E123.

This sequence belongs to the Ntdp family. Requires Mg(2+) as cofactor.

The enzyme catalyses a ribonucleoside 5'-triphosphate + H2O = a ribonucleoside 5'-diphosphate + phosphate + H(+). It carries out the reaction a ribonucleoside 5'-diphosphate + H2O = a ribonucleoside 5'-phosphate + phosphate + H(+). In terms of biological role, has nucleoside phosphatase activity towards nucleoside triphosphates and nucleoside diphosphates. This is Nucleoside triphosphate/diphosphate phosphatase from Streptococcus pneumoniae serotype 19F (strain G54).